A 239-amino-acid polypeptide reads, in one-letter code: LexA repressor (239 aa).

The interval 1–40 is disordered; the sequence is MTEAATGPEGADPSRAARSLPGRPPGIRADSSGLTDRQRR. Positions 58–78 form a DNA-binding region, H-T-H motif; the sequence is MREIGQAVGLSSTSSVAHQLM. The span at 89 to 100 shows a compositional bias: basic and acidic residues; that stretch reads DPHRPRAYEVRG. The interval 89–116 is disordered; it reads DPHRPRAYEVRGSDQPSAQPADTSGKPA. Active-site for autocatalytic cleavage activity residues include Ser163 and Lys200.

Belongs to the peptidase S24 family. In terms of assembly, homodimer.

It catalyses the reaction Hydrolysis of Ala-|-Gly bond in repressor LexA.. Functionally, represses a number of genes involved in the response to DNA damage (SOS response), including recA and lexA. In the presence of single-stranded DNA, RecA interacts with LexA causing an autocatalytic cleavage which disrupts the DNA-binding part of LexA, leading to derepression of the SOS regulon and eventually DNA repair. The sequence is that of LexA repressor from Streptomyces clavuligerus.